The following is a 486-amino-acid chain: CREB-regulated transcription coactivator 1 homolog (486 aa).

The tract at residues 1-62 (MSNSNTPRKF…APMPIPQQGL (62 aa)) is disordered. Residues 9 to 23 (KFSEKIAILERKQNE) show a composition bias toward basic and acidic residues. Polar residues predominate over residues 34-52 (QVQSITHHPTDSSGSSTAT). S76 carries the post-translational modification Phosphoserine; by AMPK. The tract at residues 103–166 (PIQGHRSRSP…PPYNQPGQLV (64 aa)) is disordered. Residues 144-160 (RTPPQHPQYTPYGPPYN) show a composition bias toward pro residues. S179 bears the Phosphoserine; by AMPK mark. Disordered regions lie at residues 214 to 278 (SMPG…QSPN), 327 to 417 (FNQD…SNSP), and 460 to 486 (APPQ…MLQN). Polar residues-rich tracts occupy residues 224–245 (PNSQ…QGSP), 387–402 (PESQ…QLDP), and 461–475 (PPQT…NNSF).

The protein belongs to the TORC family. As to quaternary structure, interacts with crh-1. In terms of processing, phosphorylated by AMPK at Ser-76 and Ser-179. Dephosphorylated by tax-6, the catalytic subunit of calcineurin. In terms of tissue distribution, expressed throughout the intestine and in head and tail neurons. Expressed in octopaminergic RIC neurons.

It is found in the nucleus. It localises to the cytoplasm. The protein localises to the cytosol. In terms of biological role, transcriptional coactivator for crh-1, the homolog of vertebrate transcription factor CREB1. Regulates the transcription of metabolic genes and may have a role in mitochondrial dynamics and metabolism. Involved in modulation of lifespan. Through crh-1, counteracts the pro-lifespan-extension signals of AMPK both cell autonomously and, when expressed in neurons, at a systemic level, possibly using the catecholamine analog, octopamine, as a messenger. In Caenorhabditis elegans, this protein is CREB-regulated transcription coactivator 1 homolog.